A 212-amino-acid chain; its full sequence is MNDAALAPDVSAALERGLQAQSLDTAFAAPLLRYLALLVRWNKTYNLTAVRDPRAMVTRHLLDSLAMQPYIASGMLADLGTGPGLPGIPLAITRPQLQVTLVESNGKKARFMREALRHLELRNARVAESRAEALDEPTAYDHLTARALDTLAGIIAVGGHLLRPGGSLLAMKGIYPHEEIAALPEGWTMSEVHQLQVPGLDGERHLVVVRKA.

S-adenosyl-L-methionine is bound by residues Gly-80, Leu-85, 131 to 132 (AE), and Arg-146.

Belongs to the methyltransferase superfamily. RNA methyltransferase RsmG family.

It localises to the cytoplasm. It carries out the reaction guanosine(527) in 16S rRNA + S-adenosyl-L-methionine = N(7)-methylguanosine(527) in 16S rRNA + S-adenosyl-L-homocysteine. Its function is as follows. Specifically methylates the N7 position of guanine in position 527 of 16S rRNA. This is Ribosomal RNA small subunit methyltransferase G from Xanthomonas oryzae pv. oryzae (strain KACC10331 / KXO85).